The chain runs to 183 residues: uncharacterized protein (183 aa).

The N-terminal stretch at 1–17 (MVLFILVLYTCIQDGNG) is a signal peptide.

This is an uncharacterized protein from Saccharomyces cerevisiae (strain ATCC 204508 / S288c) (Baker's yeast).